Reading from the N-terminus, the 333-residue chain is MKNLRNRSFLTLLDFSRQEVEFLLTLSEDLKRAKYIGTEKPMLKNKNIALLFEKDSTRTRCAFEVAAHDQGANVTYLGPTGSQMGKKETTKDTARVLGGMYDGIEYRGFSQRTVETLAEYSGVPVWNGLTDEDHPTQVLADFLTAKEVLKKDYADINFTYVGDGRNNVANALMQGAAIMGMNFHLVCPKELNPTDELLNRCKNIAAENGGNILITDDIDQGVKGSDVIYTDVWVSMGEPDEVWKERLELLKPYQVNKEIMDKTGNPNVIFEHCLPSFHNADTKIGQQIFEKYGIREMEVTDEVFESKASVVFQEAENRMHTIKAVMVATLGEF.

Residues 56–59 (STRT), Gln83, Arg107, and 134–137 (HPTQ) each bind carbamoyl phosphate. L-ornithine contacts are provided by residues Asn167, Asp231, and 235–236 (SM). Carbamoyl phosphate-binding positions include 273–274 (CL) and Arg318.

Belongs to the aspartate/ornithine carbamoyltransferase superfamily. OTCase family.

The protein resides in the cytoplasm. The enzyme catalyses carbamoyl phosphate + L-ornithine = L-citrulline + phosphate + H(+). It functions in the pathway amino-acid biosynthesis; L-arginine biosynthesis; L-arginine from L-ornithine and carbamoyl phosphate: step 1/3. Reversibly catalyzes the transfer of the carbamoyl group from carbamoyl phosphate (CP) to the N(epsilon) atom of ornithine (ORN) to produce L-citrulline. In Staphylococcus aureus (strain COL), this protein is Ornithine carbamoyltransferase (argF).